We begin with the raw amino-acid sequence, 213 residues long: Orotate phosphoribosyltransferase (213 aa).

5-phospho-alpha-D-ribose 1-diphosphate is bound at residue lysine 26. 34–35 (FF) contacts orotate. 5-phospho-alpha-D-ribose 1-diphosphate is bound by residues 72–73 (YK), arginine 99, lysine 100, lysine 103, histidine 105, and 124–132 (DDVITAGTA). The orotate site is built by threonine 128 and arginine 156.

The protein belongs to the purine/pyrimidine phosphoribosyltransferase family. PyrE subfamily. In terms of assembly, homodimer. Mg(2+) is required as a cofactor.

The catalysed reaction is orotidine 5'-phosphate + diphosphate = orotate + 5-phospho-alpha-D-ribose 1-diphosphate. It participates in pyrimidine metabolism; UMP biosynthesis via de novo pathway; UMP from orotate: step 1/2. In terms of biological role, catalyzes the transfer of a ribosyl phosphate group from 5-phosphoribose 1-diphosphate to orotate, leading to the formation of orotidine monophosphate (OMP). The polypeptide is Orotate phosphoribosyltransferase (Saccharophagus degradans (strain 2-40 / ATCC 43961 / DSM 17024)).